A 47-amino-acid chain; its full sequence is Potassium channel toxin TcoKIK (47 aa).

The BetaSPN-type CS-alpha/beta domain occupies 14–47; that stretch reads EYACPAIDKFCEDHCAAKKAVGKCDDFKCNCIKL. Cystine bridges form between Cys17–Cys37, Cys24–Cys42, and Cys28–Cys44.

Belongs to the long chain scorpion toxin family. Class 2 subfamily. In terms of tissue distribution, expressed by the venom gland.

Its subcellular location is the secreted. It is found in the target cell membrane. Its function is as follows. Blocks voltage-gated potassium channels. Its application (10 uM) to cells recombinantly expressing channels results in membrane damage and cell lysis. The sequence is that of Potassium channel toxin TcoKIK from Tityus costatus (Brazilian scorpion).